Consider the following 367-residue polypeptide: Ribosomal lysine N-methyltransferase 5 (367 aa).

Residues tryptophan 110, 170-172 (GAG), aspartate 192, tryptophan 256, and methionine 288 each bind S-adenosyl-L-methionine.

This sequence belongs to the class I-like SAM-binding methyltransferase superfamily. RKM5 family.

Its function is as follows. S-adenosyl-L-methionine-dependent protein-lysine N-methyltransferase that monomethylates 60S ribosomal protein L1 (RPL1A and RPL1B) at 'Lys-46'. In Saccharomyces cerevisiae (strain JAY291) (Baker's yeast), this protein is Ribosomal lysine N-methyltransferase 5 (RKM5).